Here is a 254-residue protein sequence, read N- to C-terminus: Probable transcriptional regulatory protein HDEF_0869 (254 aa).

Residues 1 to 20 (MAGHSKWANTKHRKAAQDAK) are disordered.

This sequence belongs to the TACO1 family.

It localises to the cytoplasm. This Hamiltonella defensa subsp. Acyrthosiphon pisum (strain 5AT) protein is Probable transcriptional regulatory protein HDEF_0869.